The following is a 290-amino-acid chain: Fructose-1,6-bisphosphatase class 1 (290 aa).

Positions 78, 96, 98, and 99 each coordinate Mg(2+). Substrate-binding positions include 99-102, Tyr201, and Lys226; that span reads DGSS. Residue Glu232 participates in Mg(2+) binding.

The protein belongs to the FBPase class 1 family. In terms of assembly, homotetramer. It depends on Mg(2+) as a cofactor.

The protein resides in the cytoplasm. The enzyme catalyses beta-D-fructose 1,6-bisphosphate + H2O = beta-D-fructose 6-phosphate + phosphate. Its pathway is carbohydrate biosynthesis; gluconeogenesis. The sequence is that of Fructose-1,6-bisphosphatase class 1 from Helicobacter pylori (strain G27).